Consider the following 331-residue polypeptide: D-alanine--D-alanine ligase (331 aa).

Positions 112 to 314 (KRIWRSEGLP…YEDLCLRLLA (203 aa)) constitute an ATP-grasp domain. Position 138–193 (138–193 (LQTLGAPMIVKPAREGSTIGLSKVHQAQQCASAYLLAARYDPEVLCEQFIAGDELT)) interacts with ATP. The Mg(2+) site is built by aspartate 267, glutamate 281, and asparagine 283.

This sequence belongs to the D-alanine--D-alanine ligase family. Mg(2+) is required as a cofactor. Mn(2+) serves as cofactor.

The protein localises to the cytoplasm. It carries out the reaction 2 D-alanine + ATP = D-alanyl-D-alanine + ADP + phosphate + H(+). It functions in the pathway cell wall biogenesis; peptidoglycan biosynthesis. Functionally, cell wall formation. In Verminephrobacter eiseniae (strain EF01-2), this protein is D-alanine--D-alanine ligase.